The primary structure comprises 430 residues: Lipoyl synthase, mitochondrial (430 aa).

A mitochondrion-targeting transit peptide spans 1–37 (MATSAGKLRTLYSAHSSLSSLPPSARPTLQLATLRSY). Positions 39 to 55 (TTTPHDSPIGNTSNTPP) are enriched in polar residues. Residues 39–59 (TTTPHDSPIGNTSNTPPTVKR) are disordered. C141, C146, C152, C172, C176, C179, and S387 together coordinate [4Fe-4S] cluster. One can recognise a Radical SAM core domain in the interval 155 to 376 (GSSKSAATAT…KERALEMGFL (222 aa)).

Belongs to the radical SAM superfamily. Lipoyl synthase family. It depends on [4Fe-4S] cluster as a cofactor.

It is found in the mitochondrion. It catalyses the reaction [[Fe-S] cluster scaffold protein carrying a second [4Fe-4S](2+) cluster] + N(6)-octanoyl-L-lysyl-[protein] + 2 oxidized [2Fe-2S]-[ferredoxin] + 2 S-adenosyl-L-methionine + 4 H(+) = [[Fe-S] cluster scaffold protein] + N(6)-[(R)-dihydrolipoyl]-L-lysyl-[protein] + 4 Fe(3+) + 2 hydrogen sulfide + 2 5'-deoxyadenosine + 2 L-methionine + 2 reduced [2Fe-2S]-[ferredoxin]. The protein operates within protein modification; protein lipoylation via endogenous pathway; protein N(6)-(lipoyl)lysine from octanoyl-[acyl-carrier-protein]: step 2/2. Its function is as follows. Catalyzes the radical-mediated insertion of two sulfur atoms into the C-6 and C-8 positions of the octanoyl moiety bound to the lipoyl domains of lipoate-dependent enzymes, thereby converting the octanoylated domains into lipoylated derivatives. This is Lipoyl synthase, mitochondrial from Ajellomyces capsulatus (strain H143) (Darling's disease fungus).